We begin with the raw amino-acid sequence, 179 residues long: FADH(2)-dependent resorcinol hydroxylase, reductase component (179 aa).

This sequence belongs to the non-flavoprotein flavin reductase family. The FADH(2)-dependent resorcinol hydroxylase is composed of two subunits, GraA (the oxygenase component) and GraD (the reductase component). Both subunits are required for activity.

The enzyme catalyses FADH2 + NAD(+) = FAD + NADH + 2 H(+). Its pathway is aromatic compound metabolism. In terms of biological role, involved in the gamma-resorcylate (2,6-dihydroxybenzoate) catabolism. Reductase component of the resorcinol hydroxylase, which catalyzes the FADPH-dependent conversion of resorcinol to hydroxyquinol. Catalyzes the reduction of FAD by NADH. The reduced flavin is then transferred to the oxygenase component GraA. In Rhizobium sp. (strain MTP-10005), this protein is FADH(2)-dependent resorcinol hydroxylase, reductase component.